A 92-amino-acid chain; its full sequence is Small ribosomal subunit protein uS19 (92 aa).

It belongs to the universal ribosomal protein uS19 family.

Protein S19 forms a complex with S13 that binds strongly to the 16S ribosomal RNA. The sequence is that of Small ribosomal subunit protein uS19 from Rickettsia typhi (strain ATCC VR-144 / Wilmington).